We begin with the raw amino-acid sequence, 429 residues long: Alpha-galactosidase A (429 aa).

The signal sequence occupies residues 1–31; that stretch reads MQLRNPELHLGCALALRFLALVSWDIPGARA. 2 disulfides stabilise this stretch: Cys-52–Cys-94 and Cys-56–Cys-63. An N-linked (GlcNAc...) asparagine glycan is attached at Asn-139. Cys-142 and Cys-172 form a disulfide bridge. Asp-170 serves as the catalytic Nucleophile. An N-linked (GlcNAc...) asparagine glycan is attached at Asn-192. The cysteines at positions 202 and 223 are disulfide-linked. 203 to 207 is a binding site for substrate; sequence EWPLY. The N-linked (GlcNAc...) asparagine glycan is linked to Asn-215. Catalysis depends on Asp-231, which acts as the Proton donor. A disulfide bridge links Cys-378 with Cys-382.

The protein belongs to the glycosyl hydrolase 27 family. In terms of assembly, homodimer.

It localises to the lysosome. It catalyses the reaction Hydrolysis of terminal, non-reducing alpha-D-galactose residues in alpha-D-galactosides, including galactose oligosaccharides, galactomannans and galactolipids.. The catalysed reaction is a globoside Gb3Cer (d18:1(4E)) + H2O = a beta-D-Gal-(1-&gt;4)-beta-D-Glc-(1&lt;-&gt;1)-Cer(d18:1(4E)) + D-galactose. The enzyme catalyses a globoside Gb3Cer + H2O = a beta-D-galactosyl-(1-&gt;4)-beta-D-glucosyl-(1&lt;-&gt;1)-ceramide + D-galactose. Its activity is regulated as follows. Galactosylgalactosylglucosylceramidase activity is stimulated by saposin B and ammonium chloride. Catalyzes the hydrolysis of glycosphingolipids and participates in their degradation in the lysosome. The polypeptide is Alpha-galactosidase A (Homo sapiens (Human)).